The following is a 655-amino-acid chain: p-hydroxybenzoic acid efflux pump subunit AaeB (655 aa).

The next 11 helical transmembrane spans lie at 13-33 (FAVK…HFQL), 38-58 (WAVL…GGEP), 69-89 (LRII…ISMI), 93-113 (LLMI…SSLV), 121-141 (WGLS…EPLL), 152-172 (EIVI…PRSI), 370-390 (LFWL…IAVV), 407-427 (FIYG…VIIP), 431-451 (QSML…GIEV), 459-479 (MGAL…TFHF), and 482-502 (FLDS…VILL).

This sequence belongs to the aromatic acid exporter ArAE (TC 2.A.85) family.

The protein localises to the cell inner membrane. In terms of biological role, forms an efflux pump with AaeA. Could function as a metabolic relief valve, allowing to eliminate certain compounds when they accumulate to high levels in the cell. This Salmonella agona (strain SL483) protein is p-hydroxybenzoic acid efflux pump subunit AaeB.